A 409-amino-acid chain; its full sequence is Nucleoprotein (409 aa).

Disordered regions lie at residues 1 to 32 (MASG…SSGN), 44 to 69 (LNSP…QQHG), 121 to 194 (ADVK…GSED), and 238 to 259 (VDQV…DKMN). The tract at residues 29–160 (SSGNASWFQA…GNFRWDFIPL (132 aa)) is RNA-binding. The CoV N NTD domain occupies 31 to 156 (GNASWFQAIK…GGPDGNFRWD (126 aa)). Positions 162-179 (RGRSGRSTAASSAASSRP) are enriched in low complexity. Basic and acidic residues-rich tracts occupy residues 180–192 (PSRE…RSGS) and 247–259 (KGKE…DKMN). A phosphoserine; by host mark is found at S190 and S192. Residues 215–331 (TKAKADEMAH…QCVDGVGTRP (117 aa)) form the CoV N CTD domain. The tract at residues 226–333 (RYCKRTIPPG…VDGVGTRPKD (108 aa)) is dimerization. C320 and C323 are disulfide-bonded. Positions 326 to 409 (GVGTRPKDDE…GDSALGENEL (84 aa)) are disordered. Low complexity predominate over residues 341-356 (RSSSRPATRTSSPAPR). A compositionally biased stretch (basic residues) spans 358–367 (QRLKKEKRPK). Positions 368–384 (KQDDEVDKALTSDEERN) are enriched in basic and acidic residues. Residue T378 is modified to Phosphothreonine; by host. Phosphoserine; by host is present on S379.

It belongs to the gammacoronavirus nucleocapsid protein family. Homooligomer. Both monomeric and oligomeric forms interact with RNA. Interacts with protein M. Interacts with NSP3; this interaction serves to tether the genome to the newly translated replicase-transcriptase complex at a very early stage of infection. ADP-ribosylated. The ADP-ribosylation is retained in the virion during infection. Post-translationally, phosphorylated on serine and threonine residues.

Its subcellular location is the virion. The protein localises to the host endoplasmic reticulum-Golgi intermediate compartment. It localises to the host Golgi apparatus. Functionally, packages the positive strand viral genome RNA into a helical ribonucleocapsid (RNP) and plays a fundamental role during virion assembly through its interactions with the viral genome and membrane protein M. Plays an important role in enhancing the efficiency of subgenomic viral RNA transcription as well as viral replication. This Gallus gallus (Chicken) protein is Nucleoprotein.